Here is a 240-residue protein sequence, read N- to C-terminus: Uridylate kinase (240 aa).

14–17 contacts ATP; that stretch reads KLSG. UMP is bound at residue G56. Positions 57 and 61 each coordinate ATP. UMP-binding positions include D76 and 137-144; that span reads TGNPFFTT. 3 residues coordinate ATP: T164, Y170, and D173.

The protein belongs to the UMP kinase family. As to quaternary structure, homohexamer.

The protein localises to the cytoplasm. It carries out the reaction UMP + ATP = UDP + ADP. Its pathway is pyrimidine metabolism; CTP biosynthesis via de novo pathway; UDP from UMP (UMPK route): step 1/1. With respect to regulation, inhibited by UTP. Its function is as follows. Catalyzes the reversible phosphorylation of UMP to UDP. The chain is Uridylate kinase from Verminephrobacter eiseniae (strain EF01-2).